The chain runs to 400 residues: MEPGLLRPAPVSEVIVLHYNYTGKLRGARYQPGAGLRADAAVCLAVCAFIVLENLAVLLVLVRHPRFHAPMFLLLGSLTLSDLLAGAAYATNILLSGPLTLRLSPALWFAREGGVFVALAASVLSLLAIALERHLTMARRGPAPAASRARTLAMAVAAWGASLLLGLLPALGWNCLGRLETCSTVLPLYAKAYVLFCVLAFLGILAAICALYARIYCQVRANARRLRAGPGSRRATSSSRSRHTPRSLALLRTLSVVLLAFVACWGPLFLLLLLDVACPARACPVLLQADPFLGLAMANSLLNPIIYTFTNRDLRHALLRLLCCGRGPCNQDSSNSLQRSPSAAGPSGGGLRRCLPPTLDRSSSPSEHLSPQQDGVDTSCSTGSPGVATANRSLVPTATD.

At 1-41 (MEPGLLRPAPVSEVIVLHYNYTGKLRGARYQPGAGLRADAA) the chain is on the extracellular side. N-linked (GlcNAc...) asparagine glycosylation occurs at N20. The chain crosses the membrane as a helical span at residues 42-62 (VCLAVCAFIVLENLAVLLVLV). The Cytoplasmic segment spans residues 63–68 (RHPRFH). A helical membrane pass occupies residues 69 to 89 (APMFLLLGSLTLSDLLAGAAY). At 90-111 (ATNILLSGPLTLRLSPALWFAR) the chain is on the extracellular side. Residues 112-132 (EGGVFVALAASVLSLLAIALE) traverse the membrane as a helical segment. At 133 to 151 (RHLTMARRGPAPAASRART) the chain is on the cytoplasmic side. Residues 152 to 172 (LAMAVAAWGASLLLGLLPALG) form a helical membrane-spanning segment. The Extracellular segment spans residues 173–192 (WNCLGRLETCSTVLPLYAKA). The chain crosses the membrane as a helical span at residues 193–213 (YVLFCVLAFLGILAAICALYA). Residues 214–253 (RIYCQVRANARRLRAGPGSRRATSSSRSRHTPRSLALLRT) lie on the Cytoplasmic side of the membrane. The helical transmembrane segment at 254–274 (LSVVLLAFVACWGPLFLLLLL) threads the bilayer. The Extracellular portion of the chain corresponds to 275 to 288 (DVACPARACPVLLQ). A helical membrane pass occupies residues 289 to 309 (ADPFLGLAMANSLLNPIIYTF). The Cytoplasmic segment spans residues 310 to 400 (TNRDLRHALL…NRSLVPTATD (91 aa)). C324 carries the S-palmitoyl cysteine lipid modification. Residues 331–400 (QDSSNSLQRS…NRSLVPTATD (70 aa)) form a disordered region. Phosphoserine occurs at positions 340, 342, and 384. Positions 360–400 (DRSSSPSEHLSPQQDGVDTSCSTGSPGVATANRSLVPTATD) are enriched in polar residues.

Belongs to the G-protein coupled receptor 1 family. Expressed in spleen and brain. In the CNS expression is restricted to oligodendrocytes.

Its subcellular location is the cell membrane. Functionally, receptor for the lysosphingolipid sphingosine 1-phosphate (S1P). S1P is a bioactive lysophospholipid that elicits diverse physiological effect on most types of cells and tissues. Is coupled to both the G(i/0)alpha and G(12) subclass of heteromeric G-proteins. S1P activation on oligodendroglial cells modulates two distinct functional pathways mediating either process retraction or cell survival. S1P activation on O4-positive pre-oligodendrocytes induces process retraction via a Rho kinase/collapsin response-mediated protein signaling pathway. The S1P-induced survival of mature oligodendrocytes is mediated through a pertussis toxin-sensitive, Akt-dependent pathway. S1P activation on oligodendroglial cells modulates two distinct functional pathways mediating either process retraction or cell survival. These effects depend on the developmental stage of the cell. This Mus musculus (Mouse) protein is Sphingosine 1-phosphate receptor 5 (S1pr5).